The chain runs to 109 residues: Nucleoid-associated protein VS_0917 (109 aa).

2 disordered regions span residues 1-22 and 88-109; these read MFGK…ERMQ and QKEK…KMPF. A compositionally biased stretch (low complexity) spans 9 to 18; it reads NMMKQAQQMQ.

The protein belongs to the YbaB/EbfC family. Homodimer.

It localises to the cytoplasm. The protein localises to the nucleoid. Functionally, binds to DNA and alters its conformation. May be involved in regulation of gene expression, nucleoid organization and DNA protection. This chain is Nucleoid-associated protein VS_0917, found in Vibrio atlanticus (strain LGP32) (Vibrio splendidus (strain Mel32)).